A 227-amino-acid chain; its full sequence is Cytochrome c oxidase subunit 2 (227 aa).

The Mitochondrial intermembrane portion of the chain corresponds to 1 to 14; that stretch reads MAYPLQLGLQDATS. A helical transmembrane segment spans residues 15–45; the sequence is PIMEELMNFHDHTLMIVFLISSLVLYIISLM. Residues 46–59 lie on the Mitochondrial matrix side of the membrane; it reads LTTKLTHTSTMDAQ. A helical transmembrane segment spans residues 60 to 87; sequence EVETIWTILPAAILVLIALPSLRILYMM. At 88–227 the chain is on the mitochondrial intermembrane side; it reads DEINNPVLTV…YFENWSASMI (140 aa). Residues histidine 161, cysteine 196, glutamate 198, cysteine 200, histidine 204, and methionine 207 each coordinate Cu cation. Mg(2+) is bound at residue glutamate 198. Phosphotyrosine is present on tyrosine 218.

It belongs to the cytochrome c oxidase subunit 2 family. Component of the cytochrome c oxidase (complex IV, CIV), a multisubunit enzyme composed of 14 subunits. The complex is composed of a catalytic core of 3 subunits MT-CO1, MT-CO2 and MT-CO3, encoded in the mitochondrial DNA, and 11 supernumerary subunits COX4I, COX5A, COX5B, COX6A, COX6B, COX6C, COX7A, COX7B, COX7C, COX8 and NDUFA4, which are encoded in the nuclear genome. The complex exists as a monomer or a dimer and forms supercomplexes (SCs) in the inner mitochondrial membrane with NADH-ubiquinone oxidoreductase (complex I, CI) and ubiquinol-cytochrome c oxidoreductase (cytochrome b-c1 complex, complex III, CIII), resulting in different assemblies (supercomplex SCI(1)III(2)IV(1) and megacomplex MCI(2)III(2)IV(2)). Found in a complex with TMEM177, COA6, COX18, COX20, SCO1 and SCO2. Interacts with TMEM177 in a COX20-dependent manner. Interacts with COX20. Interacts with COX16. Cu cation is required as a cofactor.

Its subcellular location is the mitochondrion inner membrane. The catalysed reaction is 4 Fe(II)-[cytochrome c] + O2 + 8 H(+)(in) = 4 Fe(III)-[cytochrome c] + 2 H2O + 4 H(+)(out). Its function is as follows. Component of the cytochrome c oxidase, the last enzyme in the mitochondrial electron transport chain which drives oxidative phosphorylation. The respiratory chain contains 3 multisubunit complexes succinate dehydrogenase (complex II, CII), ubiquinol-cytochrome c oxidoreductase (cytochrome b-c1 complex, complex III, CIII) and cytochrome c oxidase (complex IV, CIV), that cooperate to transfer electrons derived from NADH and succinate to molecular oxygen, creating an electrochemical gradient over the inner membrane that drives transmembrane transport and the ATP synthase. Cytochrome c oxidase is the component of the respiratory chain that catalyzes the reduction of oxygen to water. Electrons originating from reduced cytochrome c in the intermembrane space (IMS) are transferred via the dinuclear copper A center (CU(A)) of subunit 2 and heme A of subunit 1 to the active site in subunit 1, a binuclear center (BNC) formed by heme A3 and copper B (CU(B)). The BNC reduces molecular oxygen to 2 water molecules using 4 electrons from cytochrome c in the IMS and 4 protons from the mitochondrial matrix. The chain is Cytochrome c oxidase subunit 2 (MT-CO2) from Micaelamys namaquensis (Namaqua rock rat).